A 132-amino-acid chain; its full sequence is Inclusion membrane protein E (132 aa).

The next 2 helical transmembrane spans lie at 41–61 and 66–86; these read LGVV…AVGV and FALG…ATSA.

Its subcellular location is the secreted. The protein resides in the host vacuole. The protein localises to the host pathogen-containing vacuole. It is found in the host pathogen-containing vacuole membrane. Inclusion membrane protein probably involved in early modification events of the chlamydial inclusion. The polypeptide is Inclusion membrane protein E (Chlamydia trachomatis serovar L2 (strain ATCC VR-902B / DSM 19102 / 434/Bu)).